The chain runs to 184 residues: Endothelial cell-specific molecule 1 (184 aa).

The signal sequence occupies residues 1 to 21 (MKSLLLLTTLLIPLHLGMAWS). The 79-residue stretch at 24–102 (YAVDCPEHCD…GDEFGVCKDC (79 aa)) folds into the IGFBP N-terminal domain. Disulfide bonds link Cys-28–Cys-51, Cys-32–Cys-53, Cys-37–Cys-54, Cys-43–Cys-57, Cys-65–Cys-83, and Cys-77–Cys-99. The disordered stretch occupies residues 145-184 (RTSASQTERDAASGDGNAVREEIGDRNAARPSVMKWLNPR). The span at 151 to 172 (TERDAASGDGNAVREEIGDRNA) shows a compositional bias: basic and acidic residues. The O-linked (Xyl...) (chondroitin sulfate) serine glycan is linked to Ser-157.

O-glycosylated; contains chondroitin sulfate and dermatan sulfate. Pineal gland specific.

The protein localises to the secreted. Its function is as follows. Involved in angiogenesis; promotes angiogenic sprouting. May have potent implications in lung endothelial cell-leukocyte interactions. The polypeptide is Endothelial cell-specific molecule 1 (Esm1) (Rattus norvegicus (Rat)).